The primary structure comprises 202 residues: ATP-dependent Clp protease proteolytic subunit (202 aa).

Residue Ser106 is the Nucleophile of the active site. His131 is a catalytic residue.

The protein belongs to the peptidase S14 family. In terms of assembly, fourteen ClpP subunits assemble into 2 heptameric rings which stack back to back to give a disk-like structure with a central cavity, resembling the structure of eukaryotic proteasomes.

Its subcellular location is the cytoplasm. The enzyme catalyses Hydrolysis of proteins to small peptides in the presence of ATP and magnesium. alpha-casein is the usual test substrate. In the absence of ATP, only oligopeptides shorter than five residues are hydrolyzed (such as succinyl-Leu-Tyr-|-NHMec, and Leu-Tyr-Leu-|-Tyr-Trp, in which cleavage of the -Tyr-|-Leu- and -Tyr-|-Trp bonds also occurs).. Functionally, cleaves peptides in various proteins in a process that requires ATP hydrolysis. Has a chymotrypsin-like activity. Plays a major role in the degradation of misfolded proteins. This Shewanella sp. (strain MR-7) protein is ATP-dependent Clp protease proteolytic subunit.